The sequence spans 193 residues: Holliday junction branch migration complex subunit RuvA (193 aa).

The domain I stretch occupies residues 1–64; sequence MIGRIQGTLV…EDAQQLFGFA (64 aa). Positions 65–139 are domain II; it reads TEIEREAFRQ…GKLAPDLGIT (75 aa). Residues 139 to 143 form a flexible linker region; sequence TGGKP. Residues 144-193 are domain III; that stretch reads QAIEATSEVLQALLSLGYSEKEALLALKQIPPETSVSDGIRMGLKYLSKP.

Belongs to the RuvA family. As to quaternary structure, homotetramer. Forms an RuvA(8)-RuvB(12)-Holliday junction (HJ) complex. HJ DNA is sandwiched between 2 RuvA tetramers; dsDNA enters through RuvA and exits via RuvB. An RuvB hexamer assembles on each DNA strand where it exits the tetramer. Each RuvB hexamer is contacted by two RuvA subunits (via domain III) on 2 adjacent RuvB subunits; this complex drives branch migration. In the full resolvosome a probable DNA-RuvA(4)-RuvB(12)-RuvC(2) complex forms which resolves the HJ.

Its subcellular location is the cytoplasm. Functionally, the RuvA-RuvB-RuvC complex processes Holliday junction (HJ) DNA during genetic recombination and DNA repair, while the RuvA-RuvB complex plays an important role in the rescue of blocked DNA replication forks via replication fork reversal (RFR). RuvA specifically binds to HJ cruciform DNA, conferring on it an open structure. The RuvB hexamer acts as an ATP-dependent pump, pulling dsDNA into and through the RuvAB complex. HJ branch migration allows RuvC to scan DNA until it finds its consensus sequence, where it cleaves and resolves the cruciform DNA. This Polynucleobacter asymbioticus (strain DSM 18221 / CIP 109841 / QLW-P1DMWA-1) (Polynucleobacter necessarius subsp. asymbioticus) protein is Holliday junction branch migration complex subunit RuvA.